A 466-amino-acid polypeptide reads, in one-letter code: NADH-quinone oxidoreductase subunit N (466 aa).

A run of 14 helical transmembrane segments spans residues 9 to 29 (LIPL…GAIV), 33 to 53 (CGTV…MLAP), 68 to 88 (PFTR…LLLA), 100 to 120 (EEYP…ASAA), 122 to 142 (FLTL…LVAY), 157 to 177 (LLMG…LYGA), 190 to 210 (SAAG…GLAF), 232 to 252 (VVAF…LLIL), 263 to 283 (APLW…ALLQ), 289 to 309 (MLAY…LSGG), 314 to 334 (AAAF…GALA), 359 to 379 (GVVL…VGFV), 394 to 416 (APLA…RVVV), and 438 to 458 (LSLG…GPLF).

Belongs to the complex I subunit 2 family. In terms of assembly, NDH-1 is composed of 14 different subunits. Subunits NuoA, H, J, K, L, M, N constitute the membrane sector of the complex.

Its subcellular location is the cell inner membrane. It catalyses the reaction a quinone + NADH + 5 H(+)(in) = a quinol + NAD(+) + 4 H(+)(out). NDH-1 shuttles electrons from NADH, via FMN and iron-sulfur (Fe-S) centers, to quinones in the respiratory chain. The immediate electron acceptor for the enzyme in this species is believed to be ubiquinone. Couples the redox reaction to proton translocation (for every two electrons transferred, four hydrogen ions are translocated across the cytoplasmic membrane), and thus conserves the redox energy in a proton gradient. In Geobacter metallireducens (strain ATCC 53774 / DSM 7210 / GS-15), this protein is NADH-quinone oxidoreductase subunit N.